The primary structure comprises 24 residues: Formate ester dehydrogenase gamma chain (24 aa).

Heterotrimer composed of an alpha, a beta and a gamma chain.

This is Formate ester dehydrogenase gamma chain from Amycolatopsis methanolica.